The following is a 493-amino-acid chain: Cobyric acid synthase (493 aa).

The GATase cobBQ-type domain occupies 246–440; the sequence is PIDIAVIKMP…IHGVFDGVVF (195 aa). The Nucleophile role is filled by Cys326. Residue His432 is part of the active site.

This sequence belongs to the CobB/CobQ family. CobQ subfamily.

It functions in the pathway cofactor biosynthesis; adenosylcobalamin biosynthesis. Catalyzes amidations at positions B, D, E, and G on adenosylcobyrinic A,C-diamide. NH(2) groups are provided by glutamine, and one molecule of ATP is hydrogenolyzed for each amidation. This Clostridium botulinum (strain ATCC 19397 / Type A) protein is Cobyric acid synthase.